The following is a 636-amino-acid chain: 1-deoxy-D-xylulose-5-phosphate synthase (636 aa).

Thiamine diphosphate is bound by residues histidine 74 and 115–117 (GHA). Residue aspartate 146 coordinates Mg(2+). Residues 147-148 (GA), asparagine 175, tyrosine 285, and glutamate 368 each bind thiamine diphosphate. Position 175 (asparagine 175) interacts with Mg(2+).

Belongs to the transketolase family. DXPS subfamily. In terms of assembly, homodimer. Requires Mg(2+) as cofactor. Thiamine diphosphate serves as cofactor.

The enzyme catalyses D-glyceraldehyde 3-phosphate + pyruvate + H(+) = 1-deoxy-D-xylulose 5-phosphate + CO2. Its pathway is metabolic intermediate biosynthesis; 1-deoxy-D-xylulose 5-phosphate biosynthesis; 1-deoxy-D-xylulose 5-phosphate from D-glyceraldehyde 3-phosphate and pyruvate: step 1/1. Functionally, catalyzes the acyloin condensation reaction between C atoms 2 and 3 of pyruvate and glyceraldehyde 3-phosphate to yield 1-deoxy-D-xylulose-5-phosphate (DXP). This is 1-deoxy-D-xylulose-5-phosphate synthase from Anaeromyxobacter dehalogenans (strain 2CP-1 / ATCC BAA-258).